We begin with the raw amino-acid sequence, 735 residues long: MIP-related peptides (735 aa).

The signal sequence occupies residues Met1–Ser20. The propeptide occupies Phe21–Arg135. Residues Ala33–Gln65 show a composition bias toward low complexity. 2 disordered regions span residues Ala33–Lys212 and Phe229–Ser251. Polar residues-rich tracts occupy residues His66–Ala76 and Pro101–Pro125. 3 positions are modified to phenylalanine amide: Phe142, Phe153, and Phe164. The segment covering Phe142–Met159 has biased composition (basic residues). A propeptide spanning residues Ser168 to Arg184 is cleaved from the precursor. Phe190 bears the Phenylalanine amide mark. A propeptide spanning residues Ser194–Arg203 is cleaved from the precursor. Residues Ser194 to Gly204 show a composition bias toward basic and acidic residues. Residues Phe209 and Phe229 each carry the phenylalanine amide modification. Positions Phe214–Phe229 are cleaved as a propeptide — linker peptide. Positions Ser233–Arg249 are excised as a propeptide. Phe255 is modified (phenylalanine amide). Residues Gln259–Ala267 constitute a propeptide, linker peptide. Phe274 bears the Phenylalanine amide mark. A propeptide spans Ser279–Leu287 (linker peptide). The residue at position 294 (Phe294) is a Phenylalanine amide. The propeptide occupies Gln298–Arg311. Position 317 is a phenylalanine amide (Phe317). A propeptide spanning residues Arg321–Arg332 is cleaved from the precursor. Position 338 is a phenylalanine amide (Phe338). Residues Arg342–Arg353 constitute a propeptide that is removed on maturation. Disordered regions lie at residues Leu352–Gly373 and Arg381–Ala400. Phe359 carries the phenylalanine amide modification. The propeptide occupies Arg363–Arg377. At Phe383 the chain carries Phenylalanine amide. The propeptide occupies Arg387–Arg401. Residue Phe407 is modified to Phenylalanine amide. Residues Ser412–Thr426 constitute a propeptide, linker peptide. Residues Pro430–Pro464 are disordered. Position 433 is a phenylalanine amide (Phe433). A propeptide spanning residues Arg437–Arg461 is cleaved from the precursor. Over residues Ser438–Ser447 the composition is skewed to basic and acidic residues. Gln462 is subject to Pyrrolidone carboxylic acid. Position 467 is a phenylalanine amide (Phe467). The propeptide occupies Tyr471–Arg493. Gln494 is modified (pyrrolidone carboxylic acid). Phe499 carries the phenylalanine amide modification. Residues Glu503 to Arg509 constitute a propeptide that is removed on maturation. An Isoleucine amide modification is found at Ile515. The propeptide occupies Phe519 to Arg546. A Methionine amide modification is found at Met552. A propeptide spanning residues Thr556–Lys585 is cleaved from the precursor. Val592 is subject to Valine amide. At Leu601 the chain carries Leucine amide. The residue at position 610 (Ile610) is an Isoleucine amide. Residue Val619 is modified to Valine amide. At Ile628 the chain carries Isoleucine amide. A propeptide spans Asp632–Val661 (linker peptide). Pyrrolidone carboxylic acid is present on Gln664. Ile669 carries the isoleucine amide modification. A propeptide spans Gly674–Glu705 (linker peptide). Valine amide is present on Val714. Residues Gly715–Arg735 constitute a propeptide that is removed on maturation.

Expressed in the CNS and peripheral tissues (the digestive tract, vasculature, and the reproductive organs).

Its subcellular location is the secreted. Functionally, has some structural and functional features similar to vertebrate opioid peptides. AMRPs are inhibitory on Aplysia esophagus, penis retractor muscle, and body wall muscle. The polypeptide is MIP-related peptides (MRP) (Aplysia californica (California sea hare)).